A 351-amino-acid polypeptide reads, in one-letter code: Phosphoribosylformylglycinamidine cyclo-ligase (351 aa).

Belongs to the AIR synthase family.

The protein localises to the cytoplasm. It catalyses the reaction 2-formamido-N(1)-(5-O-phospho-beta-D-ribosyl)acetamidine + ATP = 5-amino-1-(5-phospho-beta-D-ribosyl)imidazole + ADP + phosphate + H(+). It functions in the pathway purine metabolism; IMP biosynthesis via de novo pathway; 5-amino-1-(5-phospho-D-ribosyl)imidazole from N(2)-formyl-N(1)-(5-phospho-D-ribosyl)glycinamide: step 2/2. The protein is Phosphoribosylformylglycinamidine cyclo-ligase of Burkholderia pseudomallei (strain 668).